Consider the following 376-residue polypeptide: Aspartate-semialdehyde dehydrogenase (376 aa).

NADP(+)-binding positions include 11–14 (RGMV), 38–39 (TS), and Gln-74. Arg-103 lines the phosphate pocket. The active-site Acyl-thioester intermediate is the Cys-136. Gln-163 contacts substrate. Residues 166–167 (SG) and Pro-194 each bind NADP(+). Glu-242 lines the substrate pocket. Residue Lys-245 participates in phosphate binding. Arg-273 lines the substrate pocket. The active-site Proton acceptor is His-280. Residue Gln-356 participates in NADP(+) binding.

It belongs to the aspartate-semialdehyde dehydrogenase family. Homodimer.

The enzyme catalyses L-aspartate 4-semialdehyde + phosphate + NADP(+) = 4-phospho-L-aspartate + NADPH + H(+). It participates in amino-acid biosynthesis; L-lysine biosynthesis via DAP pathway; (S)-tetrahydrodipicolinate from L-aspartate: step 2/4. It functions in the pathway amino-acid biosynthesis; L-methionine biosynthesis via de novo pathway; L-homoserine from L-aspartate: step 2/3. The protein operates within amino-acid biosynthesis; L-threonine biosynthesis; L-threonine from L-aspartate: step 2/5. In terms of biological role, catalyzes the NADPH-dependent formation of L-aspartate-semialdehyde (L-ASA) by the reductive dephosphorylation of L-aspartyl-4-phosphate. This is Aspartate-semialdehyde dehydrogenase from Bordetella pertussis (strain Tohama I / ATCC BAA-589 / NCTC 13251).